Consider the following 360-residue polypeptide: MATILRRRSLGNPWEQFANWITSTDNRFYIGWFGVLMVPTLLSATICFVVAFIAAPPVDMDGIREPISGSLLYGNNIITGAVIPSSNAIGLHFYPIWEAASMDEWLYNGGPYQLVVFHFLIGIFAYLGREWEFSYRLGLRPWICVAYSAPVAAATAVFLIYPMGQGSFSDGMSLGISGTFNFMFIFQAEHNILNHPLHMFGVAGVFGGSLFAAMHGSLVTSSLIKATSYEESQNYGYKFGQEEETYNIVAAHGYFGRLIFQYASFTNSRSLHFFLAAWPVIGIWLTSLGICVMGFNLNGFNFNASITDNQGRTIYTWADIVNRANLGIEVMHERNAHNFPLDLAGTESAPVAFAAALGDG.

The next 3 membrane-spanning stretches (helical) occupy residues 29-46 (YIGW…SATI), 118-133 (HFLI…EWEF), and 142-156 (WICV…AATA). Position 118 (histidine 118) interacts with chlorophyll a. Residue tyrosine 126 coordinates pheophytin a. [CaMn4O5] cluster contacts are provided by aspartate 170 and glutamate 189. The chain crosses the membrane as a helical span at residues 197–218 (LHMFGVAGVFGGSLFAAMHGSL). Histidine 198 is a chlorophyll a binding site. A quinone contacts are provided by residues histidine 215 and 264–265 (SF). Fe cation is bound at residue histidine 215. Residue histidine 272 coordinates Fe cation. The helical transmembrane segment at 274–288 (FLAAWPVIGIWLTSL) threads the bilayer. Residues histidine 332, glutamate 333, aspartate 342, and alanine 344 each contribute to the [CaMn4O5] cluster site. The propeptide occupies 345-360 (GTESAPVAFAAALGDG).

This sequence belongs to the reaction center PufL/M/PsbA/D family. In terms of assembly, PSII is composed of 1 copy each of membrane proteins PsbA, PsbB, PsbC, PsbD, PsbE, PsbF, PsbH, PsbI, PsbJ, PsbK, PsbL, PsbM, PsbT, PsbX, Psb30/Ycf12, peripheral proteins PsbO, CyanoQ (PsbQ), PsbU, PsbV and a large number of cofactors. It forms dimeric complexes. The D1/D2 heterodimer binds P680, chlorophylls that are the primary electron donor of PSII, and subsequent electron acceptors. It shares a non-heme iron and each subunit binds pheophytin, quinone, additional chlorophylls, carotenoids and lipids. D1 provides most of the ligands for the Mn4-Ca-O5 cluster of the oxygen-evolving complex (OEC). There is also a Cl(-1) ion associated with D1 and D2, which is required for oxygen evolution. The PSII complex binds additional chlorophylls, carotenoids and specific lipids. is required as a cofactor. Tyr-161 forms a radical intermediate that is referred to as redox-active TyrZ, YZ or Y-Z. Post-translationally, C-terminally processed by CtpA; processing is essential to allow assembly of the oxygen-evolving complex and thus photosynthetic growth.

It is found in the cell inner membrane. It catalyses the reaction 2 a plastoquinone + 4 hnu + 2 H2O = 2 a plastoquinol + O2. Functionally, photosystem II (PSII) is a light-driven water:plastoquinone oxidoreductase that uses light energy to abstract electrons from H(2)O, generating O(2) and a proton gradient subsequently used for ATP formation. It consists of a core antenna complex that captures photons, and an electron transfer chain that converts photonic excitation into a charge separation. The D1/D2 (PsbA/PsbD) reaction center heterodimer binds P680, the primary electron donor of PSII as well as several subsequent electron acceptors. In Gloeobacter violaceus (strain ATCC 29082 / PCC 7421), this protein is Photosystem II protein D1 2.